The sequence spans 147 residues: Large ribosomal subunit protein uL15 (147 aa).

The segment at 21-49 is disordered; that stretch reads RVGRGEGSKGKTAGRGTKGTKARAPVRPG.

Belongs to the universal ribosomal protein uL15 family. In terms of assembly, part of the 50S ribosomal subunit.

Functionally, binds to the 23S rRNA. In Tropheryma whipplei (strain TW08/27) (Whipple's bacillus), this protein is Large ribosomal subunit protein uL15.